Reading from the N-terminus, the 405-residue chain is Tryptophan synthase beta chain (405 aa).

An N6-(pyridoxal phosphate)lysine modification is found at lysine 98.

The protein belongs to the TrpB family. Tetramer of two alpha and two beta chains. Requires pyridoxal 5'-phosphate as cofactor.

The catalysed reaction is (1S,2R)-1-C-(indol-3-yl)glycerol 3-phosphate + L-serine = D-glyceraldehyde 3-phosphate + L-tryptophan + H2O. It functions in the pathway amino-acid biosynthesis; L-tryptophan biosynthesis; L-tryptophan from chorismate: step 5/5. Its function is as follows. The beta subunit is responsible for the synthesis of L-tryptophan from indole and L-serine. In Xanthomonas euvesicatoria pv. vesicatoria (strain 85-10) (Xanthomonas campestris pv. vesicatoria), this protein is Tryptophan synthase beta chain.